A 1482-amino-acid chain; its full sequence is Chromosome partition protein MukB (1482 aa).

34–41 serves as a coordination point for ATP; the sequence is GGNGAGKS. 6 coiled-coil regions span residues 326–416, 509–603, 780–805, 835–923, 979–1116, and 1210–1265; these read LEAD…AIQY, RHLA…RAPV, RAAR…ATLS, EAEI…AKLE, LSGN…AKAG, and EAIE…LQSV. The interval 666-783 is flexible hinge; it reads PGGAEDSRLN…TLPLFGRAAR (118 aa).

The protein belongs to the SMC family. MukB subfamily. Homodimerization via its hinge domain. Binds to DNA via its C-terminal region. Interacts, and probably forms a ternary complex, with MukE and MukF via its C-terminal region. The complex formation is stimulated by calcium or magnesium. Interacts with tubulin-related protein FtsZ.

It localises to the cytoplasm. The protein resides in the nucleoid. Plays a central role in chromosome condensation, segregation and cell cycle progression. Functions as a homodimer, which is essential for chromosome partition. Involved in negative DNA supercoiling in vivo, and by this means organize and compact chromosomes. May achieve or facilitate chromosome segregation by condensation DNA from both sides of a centrally located replisome during cell division. This is Chromosome partition protein MukB from Enterobacter sp. (strain 638).